A 450-amino-acid polypeptide reads, in one-letter code: tRNA modification GTPase MnmE (450 aa).

Residues Arg23, Glu80, and Arg123 each coordinate (6S)-5-formyl-5,6,7,8-tetrahydrofolate. One can recognise a TrmE-type G domain in the interval 219-372 (GLHVVLAGKP…LRQRLLQLAG (154 aa)). Asn229 provides a ligand contact to K(+). GTP-binding positions include 229-234 (NVGKSS), 248-254 (TPIAGTT), 273-276 (DTAG), and 353-355 (SAR). Ser233 is a binding site for Mg(2+). K(+) contacts are provided by Thr248, Ile250, and Thr253. Thr254 contributes to the Mg(2+) binding site. Residue Lys450 participates in (6S)-5-formyl-5,6,7,8-tetrahydrofolate binding.

Belongs to the TRAFAC class TrmE-Era-EngA-EngB-Septin-like GTPase superfamily. TrmE GTPase family. As to quaternary structure, homodimer. Heterotetramer of two MnmE and two MnmG subunits. Requires K(+) as cofactor.

Its subcellular location is the cytoplasm. Exhibits a very high intrinsic GTPase hydrolysis rate. Involved in the addition of a carboxymethylaminomethyl (cmnm) group at the wobble position (U34) of certain tRNAs, forming tRNA-cmnm(5)s(2)U34. In Bordetella parapertussis (strain 12822 / ATCC BAA-587 / NCTC 13253), this protein is tRNA modification GTPase MnmE.